A 457-amino-acid chain; its full sequence is tRNA(Ile)-lysidine synthase (457 aa).

27-32 (SGGLDS) provides a ligand contact to ATP.

It belongs to the tRNA(Ile)-lysidine synthase family.

The protein resides in the cytoplasm. The catalysed reaction is cytidine(34) in tRNA(Ile2) + L-lysine + ATP = lysidine(34) in tRNA(Ile2) + AMP + diphosphate + H(+). Its function is as follows. Ligates lysine onto the cytidine present at position 34 of the AUA codon-specific tRNA(Ile) that contains the anticodon CAU, in an ATP-dependent manner. Cytidine is converted to lysidine, thus changing the amino acid specificity of the tRNA from methionine to isoleucine. In Hamiltonella defensa subsp. Acyrthosiphon pisum (strain 5AT), this protein is tRNA(Ile)-lysidine synthase.